A 126-amino-acid polypeptide reads, in one-letter code: MSAPNPKAFPLADSALTQQILDVVQQSQNLRQLKKGANEATKTLNRGISEFIIMAADTEPIEILLHLPLLCEDKNVPYVFVPSKTALGRACGVSRPVIAASVTTNEASAMKNQIYGIKDKIETLLI.

It belongs to the eukaryotic ribosomal protein eL8 family. Component of the U3 snoRNP particle. Binds to the C'/D and B/C motifs in U3 snoRNA. Component of the 25S U4/U6.U5 tri-snRNP particle, a subcomplex of the spliceosome. Binds to the 5' stem-loop of U4 snRNA.

Its subcellular location is the nucleus. The protein localises to the nucleolus. Functionally, common component of the spliceosome and rRNA processing machinery. In association with the spliceosomal U4/U6.U5 tri-snRNP particle, required for splicing of pre-mRNA. In association with box C/D snoRNPs, required for processing of pre-ribosomal RNA (rRNA) and site-specific 2'-O-methylation of substrate RNAs. Essential for the accumulation and stability of U4 snRNA, U6 snRNA, and box C/D snoRNAs. The protein is 13 kDa ribonucleoprotein-associated protein (SNU13) of Debaryomyces hansenii (strain ATCC 36239 / CBS 767 / BCRC 21394 / JCM 1990 / NBRC 0083 / IGC 2968) (Yeast).